Here is an 802-residue protein sequence, read N- to C-terminus: Cell division cycle 5-like protein (802 aa).

HTH myb-type domains follow at residues M1–P56 and S57–A108. DNA-binding regions (H-T-H motif) lie at residues W31 to L54 and W82 to L104. Residues A108–D143 are disordered. The span at D118–E127 shows a compositional bias: basic and acidic residues. K135 is covalently cross-linked (Glycyl lysine isopeptide (Lys-Gly) (interchain with G-Cter in SUMO2)). A coiled-coil region spans residues I142–Q245. The Nuclear localization signal signature appears at K165–K271. Residues K200 to R206 form a required for interaction with CTNNBL1 region. Residue K219 forms a Glycyl lysine isopeptide (Lys-Gly) (interchain with G-Cter in SUMO2) linkage. T227 carries the phosphothreonine modification. Residues D246–K262 show a composition bias toward basic and acidic residues. The segment at D246–A278 is disordered. The segment at R260 to G606 is interaction with PPP1R8. 2 positions are modified to phosphoserine: S303 and S358. Phosphothreonine is present on residues T377, T385, T396, T404, T411, and T415. Residues L409–H418 show a composition bias toward polar residues. A disordered region spans residues L409–Y459. A Phosphoserine modification is found at S417. Phosphothreonine occurs at positions 424 and 430. Residues R426–G440 are compositionally biased toward polar residues. Position 437 is a phosphoserine (S437). Phosphothreonine occurs at positions 438 and 442. Residue K487 forms a Glycyl lysine isopeptide (Lys-Gly) (interchain with G-Cter in SUMO2) linkage. Residues E501–Q659 are interaction with DAPK3. Coiled-coil stretches lie at residues R676–G701 and P764–F802. Residues E706 to A800 are interaction with PLRG1.

The protein belongs to the CEF1 family. As to quaternary structure, homodimer. Interacts with DAPK3. Component of the precatalytic, catalytic and postcatalytic spliceosome complexes. Part of a spliceosomal 'core' complex consisting of CDC5L, PLRG1, SPF27, CCAP1, CCAP3 and CCAP6. Interacts with PLRG1, Lodestar/TTF2, and NIPP1/PPP1R8. Component of the minor spliceosome, which splices U12-type introns. Within this complex, interacts with SCNM1. Component of the PRP19-CDC5L splicing complex composed of a core complex comprising a homotetramer of PRPF19, CDC5L, PLRG1 and BCAS2, and at least three less stably associated proteins CTNNBL1, CWC15 and HSPA8. Interacts (via its C-terminus) directly in the complex with PRPF19 and BCAS2. Interacts (via its C-terminus) directly with PRGL1 (via its WD40 repeat domain); the interaction is required for mRNA splicing but not for spliceosome assembly. Also interacts with CTNNBL1. Interacts with PRPF19 (via N-terminus). Interacts with USB1. Interacts with DDX41. In terms of processing, phosphorylated on serine and threonine residues. Phosphorylation on Thr-411 and Thr-438 is required for CDC5L-mediated mRNA splicing. Has no effect on subcellular location nor on homodimerization. Phosphorylated in vitro by CDK2. Phosphorylation enhances interaction with PPP1R8.

The protein resides in the nucleus. The protein localises to the nucleus speckle. It localises to the cytoplasm. In terms of biological role, DNA-binding protein involved in cell cycle control. May act as a transcription activator. Plays a role in pre-mRNA splicing as core component of precatalytic, catalytic and postcatalytic spliceosomal complexes. Component of the PRP19-CDC5L complex that forms an integral part of the spliceosome and is required for activating pre-mRNA splicing. The PRP19-CDC5L complex may also play a role in the response to DNA damage (DDR). As a component of the minor spliceosome, involved in the splicing of U12-type introns in pre-mRNAs. The polypeptide is Cell division cycle 5-like protein (CDC5L) (Bos taurus (Bovine)).